The following is a 474-amino-acid chain: Proline--tRNA ligase (474 aa).

The protein belongs to the class-II aminoacyl-tRNA synthetase family. ProS type 3 subfamily. In terms of assembly, homodimer.

It is found in the cytoplasm. The catalysed reaction is tRNA(Pro) + L-proline + ATP = L-prolyl-tRNA(Pro) + AMP + diphosphate. Catalyzes the attachment of proline to tRNA(Pro) in a two-step reaction: proline is first activated by ATP to form Pro-AMP and then transferred to the acceptor end of tRNA(Pro). This chain is Proline--tRNA ligase, found in Mycoplasma capricolum subsp. capricolum (strain California kid / ATCC 27343 / NCTC 10154).